The primary structure comprises 281 residues: 3-hydroxyanthranilate 3,4-dioxygenase (281 aa).

Positions 1-162 (MAGVTAIEIP…SNEFKTGKPG (162 aa)) are domain A (catalytic). Arg45 is an O2 binding site. Positions 49, 55, and 93 each coordinate Fe cation. Residue Glu55 participates in substrate binding. Substrate-binding residues include Arg97 and Glu107. A linker region spans residues 163 to 179 (KGTFACNAPYEARWTDL). The tract at residues 180-281 (PVPINRKEFI…GFAITIRMPG (102 aa)) is domain B.

Belongs to the 3-HAO family. It depends on Fe(2+) as a cofactor.

It is found in the cytoplasm. The enzyme catalyses 3-hydroxyanthranilate + O2 = (2Z,4Z)-2-amino-3-carboxymuconate 6-semialdehyde. It functions in the pathway cofactor biosynthesis; NAD(+) biosynthesis; quinolinate from L-kynurenine: step 3/3. Its function is as follows. Catalyzes the oxidative ring opening of 3-hydroxyanthranilate to 2-amino-3-carboxymuconate semialdehyde, which spontaneously cyclizes to quinolinate. This is 3-hydroxyanthranilate 3,4-dioxygenase (haao-1) from Caenorhabditis briggsae.